A 747-amino-acid polypeptide reads, in one-letter code: Zinc finger and BTB domain-containing protein 47 (747 aa).

The BTB domain occupies 15–83 (CDVDLVLVPQ…IYTSKLLVNA (69 aa)). Lysine 190 participates in a covalent cross-link: Glycyl lysine isopeptide (Lys-Gly) (interchain with G-Cter in SUMO2). Positions 243-424 (QTLHVSTGPE…ARGPPATDGL (182 aa)) are disordered. Over residues 267–277 (GREDGLQRHSD) the composition is skewed to basic and acidic residues. Acidic residues predominate over residues 278 to 354 (EEEEDDEEEE…SEEEEGEEGE (77 aa)). Residues 380–398 (RSRENARRRGTPEPEEAGR) show a composition bias toward basic and acidic residues. A C2H2-type 1 zinc finger spans residues 436-459 (HPCQKCPRVFNNRWYLEKHMNVTH). A C2H2-type 2; degenerate zinc finger spans residues 463–485 (QICDQCGKRFLLESELLLHRQTD). 7 consecutive C2H2-type zinc fingers follow at residues 490 to 513 (IQCV…KIVH), 520 to 542 (FSCE…MVAH), 548 to 570 (FTCE…SLQH), 576 to 598 (FRCE…MSIH), 604 to 626 (FMCQ…MKTH), 632 to 654 (YICE…RRTH), and 660 to 687 (YPCD…RVSH). The tract at residues 694–747 (VPAAPGLPPTQPQAHALPLLPGLPQTLPPPPHLPPPPPLFPTTASPGGRMNANN) is disordered. Residues 719 to 733 (TLPPPPHLPPPPPLF) show a composition bias toward pro residues.

This sequence belongs to the krueppel C2H2-type zinc-finger protein family.

The protein resides in the nucleus. In terms of biological role, may be involved in transcriptional regulation. The protein is Zinc finger and BTB domain-containing protein 47 (ZBTB47) of Homo sapiens (Human).